A 335-amino-acid polypeptide reads, in one-letter code: Polyprenol dehydrogenase (335 aa).

Residues isoleucine 55, tyrosine 208, lysine 212, and threonine 245 each coordinate NAD(+). Residue tyrosine 208 is the Proton acceptor of the active site.

This sequence belongs to the short-chain dehydrogenases/reductases (SDR) family.

The protein resides in the lipid droplet. It localises to the secreted. The catalysed reaction is a di-trans,poly-cis-polyprenol + NAD(+) = a di-trans,poly-cis-polyprenal + NADH + H(+). It carries out the reaction a di-trans,poly-cis-polyprenol + NADP(+) = a di-trans,poly-cis-polyprenal + NADPH + H(+). The enzyme catalyses a di-trans,poly-cis-dolichol + NADP(+) = a di-trans,poly-cis-dolichal + NADPH + H(+). It catalyses the reaction a di-trans,poly-cis-dolichol + NAD(+) = a di-trans,poly-cis-dolichal + NADH + H(+). It participates in protein modification; protein glycosylation. In terms of biological role, oxidoreductase that plays a key role in early steps of protein N-linked glycosylation by mediating two non-consecutive steps in dolichol biosynthesis. Acts both as a NAD(+)-dependent dehydrogenase and as a NADPH-dependent reductase during the conversion of polyprenol into dolichol. First catalyzes the NAD(+)-dependent dehydrogenation of polyprenol into polyprenal; polyprenal is then reduced into dolichal by SRD5A3. It then catalyzes the NADPH-dependent reduction of dolichal into dolichol. May also acts as a positive regulator of starvation-induced autophagy. The chain is Polyprenol dehydrogenase (Dhrsx) from Mus musculus (Mouse).